We begin with the raw amino-acid sequence, 22 residues long: Conotoxin MIIIJ (22 aa).

Gln1 carries the post-translational modification Pyrrolidone carboxylic acid. Intrachain disulfides connect Cys3–Cys21, Cys4–Cys19, and Cys9–Cys22.

It belongs to the conotoxin M superfamily. As to expression, expressed by the venom duct.

The protein resides in the secreted. Functionally, probable competitive antagonist of fish muscle acetylcholine receptor. Inhibits postsynaptic nicotinic acetylcholine receptors (nAChRs) from fish (zebrafish and goldfish) and frogs (IC(50)=0.1 uM). Protects these receptors from block by alpha-bungarotoxin and alpha-conotoxin EI. Does not block nAChRs at the neuromuscular junction of Rana pipiens. Shows a weak inhibition on mammalian adult and fetal muscle nAChRs (alpha-1-beta-1-delta-epsilon/CHRNA1-CHRNB1-CHRND-CHRNE and alpha-1 beta-1 gamma delta/CHRNA1-CHRNB1-CHRNG-CHRND) (IC(50)=3-45 uM). In vivo, induces paralysis in goldfish (Carassius auratus) but not mice. This Conus magus (Magical cone) protein is Conotoxin MIIIJ.